Consider the following 349-residue polypeptide: MTEMSFLNSEVLAGDLMSPFDQSGLGAEESLGLLDDYLEVAKHLKPHGFSSDKAGSSEWPAMDDGLASASDTGKEDAFSGTDWMLEKMDLKEFDFDALFRMDDLETMPDELLTTLDDTCDLFAPLVQETNKEPPQTVNPIGHLPESLIKVDQVAPFTFLQPFPCSPGVLSSTPEHSFSLELGSEVDISEGDRKPDSAAYITLIPPCVKEEDTPSDNDSGICMSPESYLGSPQHSPSTSRAPPDNLPSPGGSRGSPRPKPYDPPGVSLTAKVKTEKLDKKLKKMEQNKTAATRYRQKKRAEQEALTGECKELEKKNEALKEKADSLAKEIQYLKDLIEEVRKARGKKRVP.

Disordered stretches follow at residues 49–75 (FSSD…TGKE), 204–271 (PPCV…TAKV), and 279–298 (KLKK…QKKR). Pro-60 is modified (4-hydroxyproline). Thr-212 bears the Phosphothreonine mark. Residues Ser-214, Ser-218, Ser-223, Ser-230, and Ser-234 each carry the phosphoserine modification. The short motif at 214-223 (SDNDSGICMS) is the BetaTrCP degron motif element. The span at 229 to 239 (GSPQHSPSTSR) shows a compositional bias: polar residues. Pro-235 is subject to 4-hydroxyproline. Ser-247 is modified (phosphoserine). Ser-251 is subject to Phosphoserine; by RPS6KA3. Residues Lys-258 and Lys-270 each participate in a glycyl lysine isopeptide (Lys-Gly) (interchain with G-Cter in SUMO2) cross-link. The region spanning 276 to 339 (LDKKLKKMEQ…QYLKDLIEEV (64 aa)) is the bZIP domain. Residues 278 to 298 (KKLKKMEQNKTAATRYRQKKR) form a basic motif region. An interaction with GABBR1 region spans residues 303-339 (ALTGECKELEKKNEALKEKADSLAKEIQYLKDLIEEV). The leucine-zipper stretch occupies residues 304 to 332 (LTGECKELEKKNEALKEKADSLAKEIQYL). Lys-309 carries the post-translational modification N6-acetyllysine.

Belongs to the bZIP family. As to quaternary structure, binds DNA as a homodimer and as a heterodimer. Heterodimer; heterodimerizes with CEBPB. Heterodimer; heterodimerizes with DDIT3/CHOP. Interacts with CEP290 (via an N-terminal region). Interacts with NEK6, DAPK2 (isoform 2) and ZIPK/DAPK3. Interacts (via its leucine zipper domain) with GABBR1 and GABBR2 (via their C-termini). Forms a heterodimer with TXLNG in osteoblasts. Interacts (via its DNA binding domain) with FOXO1 (C-terminal half); the interaction occurs in osteoblasts and regulates glucose homeostasis through suppression of beta-cell proliferation and a decrease in insulin production. Interacts with SATB2; the interaction results in enhanced DNA binding and transactivation by these transcription factors. Interacts with ABRAXAS2. Interacts with TRIB3, inhibiting the transactivation activity of ATF4. Interacts with DISC1; which inhibits ATF4 transcription factor activity by disrupting ATF4 dimerization and DNA-binding. Interacts with EP300/p300; EP300/p300 stabilizes ATF4 and increases its transcriptional activity independently of its catalytic activity by preventing its ubiquitination. Post-translationally, ubiquitinated by SCF(BTRC) in response to mTORC1 signal, followed by proteasomal degradation and leading to down-regulate expression of SIRT4. Interaction with EP300/p300 inhibits ubiquitination by SCF(BTRC). Phosphorylation at Ser-251 by RPS6KA3/RSK2 in osteoblasts enhances transactivation activity and promotes osteoblast differentiation. Phosphorylated on the betaTrCP degron motif at Ser-218, followed by phosphorylation at Thr-212, Ser-223, Ser-230, Ser-234 and Ser-247, promoting interaction with BTRC and ubiquitination. Phosphorylation is promoted by mTORC1. Phosphorylation at Ser-214 by CK2 decreases its stability. Phosphorylated by NEK6. In terms of processing, hydroxylated by PHD3, leading to decreased protein stability. Ubiquitously expressed in adults.

It localises to the nucleus. The protein localises to the nucleus speckle. The protein resides in the cytoplasm. Its subcellular location is the cell membrane. It is found in the cytoskeleton. It localises to the microtubule organizing center. The protein localises to the centrosome. Functionally, transcription factor that binds the cAMP response element (CRE) (consensus: 5'-GTGACGT[AC][AG]-3') and displays two biological functions, as regulator of metabolic and redox processes under normal cellular conditions, and as master transcription factor during integrated stress response (ISR). Binds to asymmetric CRE's as a heterodimer and to palindromic CRE's as a homodimer. Core effector of the ISR, which is required for adaptation to various stress such as endoplasmic reticulum (ER) stress, amino acid starvation, mitochondrial stress or oxidative stress. During ISR, ATF4 translation is induced via an alternative ribosome translation re-initiation mechanism in response to EIF2S1/eIF-2-alpha phosphorylation, and stress-induced ATF4 acts as a master transcription factor of stress-responsive genes in order to promote cell recovery. Promotes the transcription of genes linked to amino acid sufficiency and resistance to oxidative stress to protect cells against metabolic consequences of ER oxidation. Activates the transcription of NLRP1, possibly in concert with other factors in response to ER stress. Activates the transcription of asparagine synthetase (ASNS) in response to amino acid deprivation or ER stress. However, when associated with DDIT3/CHOP, the transcriptional activation of the ASNS gene is inhibited in response to amino acid deprivation. Together with DDIT3/CHOP, mediates programmed cell death by promoting the expression of genes involved in cellular amino acid metabolic processes, mRNA translation and the terminal unfolded protein response (terminal UPR), a cellular response that elicits programmed cell death when ER stress is prolonged and unresolved. Activates the expression of COX7A2L/SCAF1 downstream of the EIF2AK3/PERK-mediated unfolded protein response, thereby promoting formation of respiratory chain supercomplexes and increasing mitochondrial oxidative phosphorylation. Together with DDIT3/CHOP, activates the transcription of the IRS-regulator TRIB3 and promotes ER stress-induced neuronal cell death by regulating the expression of BBC3/PUMA in response to ER stress. May cooperate with the UPR transcriptional regulator QRICH1 to regulate ER protein homeostasis which is critical for cell viability in response to ER stress. In the absence of stress, ATF4 translation is at low levels and it is required for normal metabolic processes such as embryonic lens formation, fetal liver hematopoiesis, bone development and synaptic plasticity. Acts as a regulator of osteoblast differentiation in response to phosphorylation by RPS6KA3/RSK2: phosphorylation in osteoblasts enhances transactivation activity and promotes expression of osteoblast-specific genes and post-transcriptionally regulates the synthesis of Type I collagen, the main constituent of the bone matrix. Cooperates with FOXO1 in osteoblasts to regulate glucose homeostasis through suppression of beta-cell production and decrease in insulin production. Activates transcription of SIRT4. Regulates the circadian expression of the core clock component PER2 and the serotonin transporter SLC6A4. Binds in a circadian time-dependent manner to the cAMP response elements (CRE) in the SLC6A4 and PER2 promoters and periodically activates the transcription of these genes. Mainly acts as a transcriptional activator in cellular stress adaptation, but it can also act as a transcriptional repressor: acts as a regulator of synaptic plasticity by repressing transcription, thereby inhibiting induction and maintenance of long-term memory. Regulates synaptic functions via interaction with DISC1 in neurons, which inhibits ATF4 transcription factor activity by disrupting ATF4 dimerization and DNA-binding. In Mus musculus (Mouse), this protein is Cyclic AMP-dependent transcription factor ATF-4.